The chain runs to 664 residues: UvrABC system protein B (664 aa).

The 158-residue stretch at 25–182 (KSFGEGKNKI…RKFLHIQYAR (158 aa)) folds into the Helicase ATP-binding domain. Residue 38–45 (GVTGSGKT) coordinates ATP. The Beta-hairpin motif lies at 91-114 (YYDYYQPEAYVPSSDTFIEKDMSM). A Helicase C-terminal domain is found at 429 to 595 (QIEDLLNEIR…TIQKEIHDIL (167 aa)). A UVR domain is found at 625–660 (DKLREALKREMLRYANDMDFEKAAMFRDKMLALGPD).

The protein belongs to the UvrB family. Forms a heterotetramer with UvrA during the search for lesions. Interacts with UvrC in an incision complex.

The protein resides in the cytoplasm. Its function is as follows. The UvrABC repair system catalyzes the recognition and processing of DNA lesions. A damage recognition complex composed of 2 UvrA and 2 UvrB subunits scans DNA for abnormalities. Upon binding of the UvrA(2)B(2) complex to a putative damaged site, the DNA wraps around one UvrB monomer. DNA wrap is dependent on ATP binding by UvrB and probably causes local melting of the DNA helix, facilitating insertion of UvrB beta-hairpin between the DNA strands. Then UvrB probes one DNA strand for the presence of a lesion. If a lesion is found the UvrA subunits dissociate and the UvrB-DNA preincision complex is formed. This complex is subsequently bound by UvrC and the second UvrB is released. If no lesion is found, the DNA wraps around the other UvrB subunit that will check the other stand for damage. The sequence is that of UvrABC system protein B from Leptospira biflexa serovar Patoc (strain Patoc 1 / Ames).